Reading from the N-terminus, the 350-residue chain is UDP-N-acetylenolpyruvoylglucosamine reductase (350 aa).

The FAD-binding PCMH-type domain maps to 24–195 (HVEATARWLL…VAVEFNLPLL (172 aa)). Arg-172 is an active-site residue. Ser-245 (proton donor) is an active-site residue. Glu-342 is an active-site residue.

This sequence belongs to the MurB family. FAD serves as cofactor.

It localises to the cytoplasm. It carries out the reaction UDP-N-acetyl-alpha-D-muramate + NADP(+) = UDP-N-acetyl-3-O-(1-carboxyvinyl)-alpha-D-glucosamine + NADPH + H(+). It functions in the pathway cell wall biogenesis; peptidoglycan biosynthesis. Cell wall formation. This chain is UDP-N-acetylenolpyruvoylglucosamine reductase, found in Xanthomonas euvesicatoria pv. vesicatoria (strain 85-10) (Xanthomonas campestris pv. vesicatoria).